A 198-amino-acid chain; its full sequence is MAQKPKVDPHVGRLGYLQALVTEFQETQSQDAKEQVLANLANFAYDPSNYEYLRQLQVLDLFLDSLSEENETLVEFAIGGLCNLCPDRANKEHILHAGGVPLIINCLSSPNEETVLSAITTLMHLSPPGRSFLPELTATPVVQCMLRFSLSASARLRNLAQIFLEDFCSPRQVAEARSRQAHSALGIPLPRSVAPRQR.

ARM repeat units follow at residues 57–99 and 100–140; these read QVLD…HAGG and VPLI…TATP. Phosphoserine is present on S169.

As to quaternary structure, component of the minor spliceosome. Within this complex, interacts with RBM48.

Its function is as follows. As a component of the minor spliceosome, involved in the splicing of U12-type introns in pre-mRNAs. The chain is Armadillo repeat-containing protein 7 (ARMC7) from Homo sapiens (Human).